The primary structure comprises 258 residues: MTEQPAQPKMTARSLAVHYGGKPALKGVDLDIVAGEVNALIGPSGCGKSTFLRCLNRMNDTIPAAKVSGQATLDGEDIYGPAGMDPVLLRARVGMVFQRPNPFPKSIYDNVAFGPRLHGLVAEGDEMDVLVRTSLERAGLWKEVKDVLGNLGTSLSGGQQQRLCIARAIAVSPEVILMDEPCSALDPIATARIEELIDELRDVFTIVMVTHSMQQAARVSQTTAFFHLGEIVEVGATEQIFTAPANSLTQGYITGRFG.

Residues 10 to 253 (MTARSLAVHY…PANSLTQGYI (244 aa)) enclose the ABC transporter domain. 42–49 (GPSGCGKS) is an ATP binding site.

Belongs to the ABC transporter superfamily. Phosphate importer (TC 3.A.1.7) family. In terms of assembly, the complex is composed of two ATP-binding proteins (PstB), two transmembrane proteins (PstC and PstA) and a solute-binding protein (PstS).

The protein resides in the cell inner membrane. It catalyses the reaction phosphate(out) + ATP + H2O = ADP + 2 phosphate(in) + H(+). Part of the ABC transporter complex PstSACB involved in phosphate import. Responsible for energy coupling to the transport system. The protein is Phosphate import ATP-binding protein PstB 3 of Paramagnetospirillum magneticum (strain ATCC 700264 / AMB-1) (Magnetospirillum magneticum).